Consider the following 442-residue polypeptide: Cell division protein FtsA (442 aa).

The interval 401–428 (VTSYDNDSYDAPEETVYDEPEQKKSDED) is disordered. A compositionally biased stretch (acidic residues) spans 407–419 (DSYDAPEETVYDE).

This sequence belongs to the FtsA/MreB family. As to quaternary structure, self-interacts. Interacts with FtsZ.

It localises to the cell membrane. Cell division protein that is involved in the assembly of the Z ring. May serve as a membrane anchor for the Z ring. This Enterococcus hirae protein is Cell division protein FtsA.